A 739-amino-acid chain; its full sequence is Malate synthase G (739 aa).

The segment covering 1–18 has biased composition (polar residues); the sequence is MTEQELLSAQTADNAGTD. Residues 1 to 23 form a disordered region; it reads MTEQELLSAQTADNAGTDSTERV. Acetyl-CoA is bound by residues V135, 142-143, S292, and R329; that span reads RF. Catalysis depends on R356, which acts as the Proton acceptor. Glyoxylate contacts are provided by residues R356, E447, and 472–475; that span reads GFLD. Positions 447 and 475 each coordinate Mg(2+). P556 provides a ligand contact to acetyl-CoA. C633 bears the Cysteine sulfenic acid (-SOH) mark. D647 serves as the catalytic Proton donor.

It belongs to the malate synthase family. GlcB subfamily. As to quaternary structure, monomer. Requires Mg(2+) as cofactor.

Its subcellular location is the cytoplasm. It catalyses the reaction glyoxylate + acetyl-CoA + H2O = (S)-malate + CoA + H(+). It functions in the pathway carbohydrate metabolism; glyoxylate cycle; (S)-malate from isocitrate: step 2/2. Inhibited by oxalate, glycolate and ATP. Functionally, involved in the glycolate utilization. Catalyzes the condensation and subsequent hydrolysis of acetyl-coenzyme A (acetyl-CoA) and glyoxylate to form malate and CoA. This chain is Malate synthase G, found in Corynebacterium glutamicum (strain ATCC 13032 / DSM 20300 / JCM 1318 / BCRC 11384 / CCUG 27702 / LMG 3730 / NBRC 12168 / NCIMB 10025 / NRRL B-2784 / 534).